The following is a 314-amino-acid chain: MSFASDMKNELTRIDVDEKNARAELSALIRMNGALSLSNQQFVINVQTENATTARRIYSLIKKVFNIEVEILVRKKMKLKKNNIYICRTKVKSREILDELGILKDGVFTHAIDPDMIQDDEMKRSYLRGAFLAGGSVNNPETSSYHLEIFSLYENHSEGLAELMNEYELNAKHLERKKGSIVYLKEAEKISDFLSLIGGYQAMLKFEDVRIVRDMRNSVNRLVNCETANLNKTVSAAMRQVESIQLIDQEIGIENLPERLKEIAKLRVENQDVSLKELGEMVSTGTISKSGVNHRLRKLNELADKIRSGEHIDM.

Residues 274–308 (SLKELGEMVSTGTISKSGVNHRLRKLNELADKIRS) constitute a DNA-binding region (H-T-H motif).

Belongs to the WhiA family.

In terms of biological role, involved in cell division and chromosome segregation. The chain is Probable cell division protein WhiA from Staphylococcus carnosus (strain TM300).